Here is a 450-residue protein sequence, read N- to C-terminus: Phosphoglucosamine mutase (450 aa).

Ser103 serves as the catalytic Phosphoserine intermediate. Residues Ser103, Asp243, Asp245, and Asp247 each coordinate Mg(2+). At Ser103 the chain carries Phosphoserine.

The protein belongs to the phosphohexose mutase family. The cofactor is Mg(2+). Post-translationally, activated by phosphorylation.

It carries out the reaction alpha-D-glucosamine 1-phosphate = D-glucosamine 6-phosphate. Its function is as follows. Catalyzes the conversion of glucosamine-6-phosphate to glucosamine-1-phosphate. The protein is Phosphoglucosamine mutase of Lactobacillus delbrueckii subsp. bulgaricus (strain ATCC 11842 / DSM 20081 / BCRC 10696 / JCM 1002 / NBRC 13953 / NCIMB 11778 / NCTC 12712 / WDCM 00102 / Lb 14).